Here is a 718-residue protein sequence, read N- to C-terminus: Manganese-exporting P-type ATPase (718 aa).

One can recognise an HMA domain in the interval 11–78; sequence GRMRVKVDWV…AIKGAAHVAA (68 aa). Transmembrane regions (helical) follow at residues 87–105, 128–146, 154–168, 177–191, 327–351, and 357–375; these read HSAE…GGVA, TVAT…RGAL, AGTD…VASL, LTVL…YLQD, VGEN…LITG, and MTML…TPTA. Residue aspartate 408 is the 4-aspartylphosphate intermediate of the active site. Residues aspartate 408, threonine 410, and aspartate 610 each contribute to the Mg(2+) site. 2 helical membrane-spanning segments follow: residues 661 to 680 and 690 to 709; these read AVDV…AAGL and PVLA…ANSS.

The protein belongs to the cation transport ATPase (P-type) (TC 3.A.3) family. Type IB subfamily.

Its subcellular location is the cell membrane. The enzyme catalyses Mn(2+)(in) + ATP + H2O = Mn(2+)(out) + ADP + phosphate + H(+). Functionally, high affinity, slow turnover Mn(2+) transporting ATPase. This Mycobacterium bovis (strain ATCC BAA-935 / AF2122/97) protein is Manganese-exporting P-type ATPase (ctpC).